The chain runs to 156 residues: Small ribosomal subunit protein uS7 (156 aa).

The protein belongs to the universal ribosomal protein uS7 family. As to quaternary structure, part of the 30S ribosomal subunit. Contacts proteins S9 and S11.

Functionally, one of the primary rRNA binding proteins, it binds directly to 16S rRNA where it nucleates assembly of the head domain of the 30S subunit. Is located at the subunit interface close to the decoding center, probably blocks exit of the E-site tRNA. In Tropheryma whipplei (strain TW08/27) (Whipple's bacillus), this protein is Small ribosomal subunit protein uS7.